The primary structure comprises 134 residues: Insulin-like peptide 4 (134 aa).

Positions 1 to 26 are cleaved as a signal peptide; the sequence is MSLIRLGLALLLLLATVSQLLQPVQG. Cystine bridges form between cysteine 31–cysteine 120, cysteine 43–cysteine 133, and cysteine 119–cysteine 124. Positions 54–108 are cleaved as a propeptide — connecting peptide; that stretch reads SSASKDARVRDLIRKLQQPDEDIEQETETGRLKQKHTDADTEKGVPPAVGSGRKL. The tract at residues 72–107 is disordered; the sequence is PDEDIEQETETGRLKQKHTDADTEKGVPPAVGSGRK. A compositionally biased stretch (basic and acidic residues) spans 81-96; the sequence is ETGRLKQKHTDADTEK.

This sequence belongs to the insulin family. As to quaternary structure, heterodimer of a B chain and an A chain linked by two disulfide bonds. Expressed at a high level in the embryonic mesoderm, with expression continuing after gastrulation and reducing from stage 12 onwards. Highly expressed in the embryonic anterior midgut rudiment and larval midgut.

It is found in the secreted. In terms of biological role, possible ligand of InR/insulin-like receptor. This chain is Insulin-like peptide 4, found in Drosophila melanogaster (Fruit fly).